Consider the following 634-residue polypeptide: CREB-regulated transcription coactivator 1 (634 aa).

2 positions are modified to phosphoserine: serine 64 and serine 113. Disordered regions lie at residues arginine 110 to aspartate 174, threonine 191 to isoleucine 221, leucine 258 to proline 331, and glutamine 357 to threonine 479. A Phosphothreonine modification is found at threonine 149. Serine 151 is modified (phosphoserine; by SIK1 and SIK2). The segment covering serine 151–aspartate 174 has biased composition (polar residues). At threonine 161 the chain carries Phosphothreonine. Basic and acidic residues predominate over residues glutamate 194–lysine 208. Positions threonine 242 to leucine 258 match the Nuclear export signal motif. 3 stretches are compositionally biased toward polar residues: residues alanine 271–alanine 283, glycine 296–glutamine 305, and leucine 314–proline 331. Residues glutamine 362–proline 397 are compositionally biased toward pro residues. Over residues glutamine 446–threonine 479 the composition is skewed to polar residues.

It belongs to the TORC family. As to quaternary structure, binds, as a tetramer, through its N-terminal region, with the bZIP domain of CREB1. 'Arg-314' in the bZIP domain of CREB1 is essential for this interaction. Interaction, via its C-terminal, with TAF4, enhances recruitment of TAF4 to CREB1. Interacts with 14-3-3 proteins, including YWHAE/14-3-3 epsilon. Interacts with calmodulin-dependent catalytic subunit PPP3CA/calcineurin A. In terms of assembly, (Microbial infection) Interacts with HTLV1 Tax. In terms of processing, phosphorylation/dephosphorylation states of Ser-151 are required for regulating transduction of CREB activity. TORCs are inactive when phosphorylated, and active when dephosphorylated at this site. This primary site of phosphorylation is mediated by SIKs (SIK1 and SIK2), is regulated by cAMP and calcium levels and is dependent on the phosphorylation of SIKs by LKB1. As to expression, highly expressed in adult and fetal brain. Located to specific regions such as the prefrontal cortex and cerebellum. Very low expression in other tissues such as heart, spleen, lung, skeletal muscle, salivary gland, ovary and kidney.

The protein localises to the cytoplasm. Its subcellular location is the nucleus. Its function is as follows. Transcriptional coactivator for CREB1 which activates transcription through both consensus and variant cAMP response element (CRE) sites. Acts as a coactivator, in the SIK/TORC signaling pathway, being active when dephosphorylated and acts independently of CREB1 'Ser-133' phosphorylation. Enhances the interaction of CREB1 with TAF4. Regulates the expression of specific CREB-activated genes such as the steroidogenic gene, StAR. Potent coactivator of PGC1alpha and inducer of mitochondrial biogenesis in muscle cells. In the hippocampus, involved in late-phase long-term potentiation (L-LTP) maintenance at the Schaffer collateral-CA1 synapses. May be required for dendritic growth of developing cortical neurons. In concert with SIK1, regulates the light-induced entrainment of the circadian clock. In response to light stimulus, coactivates the CREB-mediated transcription of PER1 which plays an important role in the photic entrainment of the circadian clock. Functionally, (Microbial infection) Plays a role of coactivator for TAX activation of the human T-cell leukemia virus type 1 (HTLV-1) long terminal repeats (LTR). This chain is CREB-regulated transcription coactivator 1, found in Homo sapiens (Human).